Reading from the N-terminus, the 190-residue chain is dCTP deaminase (190 aa).

Position 113–118 (113–118 (KSTYAR)) interacts with dCTP. Glutamate 139 (proton donor/acceptor) is an active-site residue. The dCTP site is built by glutamine 158, tyrosine 172, lysine 181, and glutamine 182.

The protein belongs to the dCTP deaminase family. Homotrimer.

The catalysed reaction is dCTP + H2O + H(+) = dUTP + NH4(+). It functions in the pathway pyrimidine metabolism; dUMP biosynthesis; dUMP from dCTP (dUTP route): step 1/2. Functionally, catalyzes the deamination of dCTP to dUTP. This is dCTP deaminase from Chlamydia pneumoniae (Chlamydophila pneumoniae).